Here is a 170-residue protein sequence, read N- to C-terminus: Vimentin A1 (170 aa).

Residues 1–10 (DLTEAANKSN) are compositionally biased toward polar residues. The segment at 1 to 20 (DLTEAANKSNEALRLAKQES) is disordered. The coil 2 stretch occupies residues 1 to 111 (DLTEAANKSN…ATYRKLLEGE (111 aa)). The IF rod domain occupies 1 to 115 (DLTEAANKSN…KLLEGEESRI (115 aa)). Residues 112 to 170 (ESRISTPLPNFSSFNLRETMLELKPNIESTFTKKVLIKTIETRDGQVLNESTQNHDDLE) form a tail region.

This sequence belongs to the intermediate filament family. In terms of assembly, homomer. Post-translationally, one of the most prominent phosphoproteins in various cells of mesenchymal origin. Phosphorylation is enhanced during cell division, at which time vimentin filaments are significantly reorganized. Expressed in low amounts in retina, optic nerve, and brain and in higher amounts in spinal cord.

Functionally, vimentins are class-III intermediate filaments found in various non-epithelial cells, especially mesenchymal cells. Vimentin is attached to the nucleus, endoplasmic reticulum, and mitochondria, either laterally or terminally. The polypeptide is Vimentin A1 (Carassius auratus (Goldfish)).